Consider the following 52-residue polypeptide: Insulin (52 aa).

Intrachain disulfides connect Cys-7–Cys-38, Cys-19–Cys-51, and Cys-37–Cys-42.

This sequence belongs to the insulin family. Heterodimer of a B chain and an A chain linked by two disulfide bonds.

The protein localises to the secreted. In terms of biological role, insulin decreases blood glucose concentration. It increases cell permeability to monosaccharides, amino acids and fatty acids. It accelerates glycolysis, the pentose phosphate cycle, and glycogen synthesis in liver. This chain is Insulin (ins), found in Polypterus senegalus (Senegal bichir).